The chain runs to 488 residues: Probable Xaa-Pro aminopeptidase ATEG_00858 (488 aa).

Aspartate 273, aspartate 284, glutamate 417, and glutamate 456 together coordinate Mn(2+).

Belongs to the peptidase M24B family. The cofactor is Mn(2+).

The enzyme catalyses Release of any N-terminal amino acid, including proline, that is linked to proline, even from a dipeptide or tripeptide.. Catalyzes the removal of a penultimate prolyl residue from the N-termini of peptides. This chain is Probable Xaa-Pro aminopeptidase ATEG_00858, found in Aspergillus terreus (strain NIH 2624 / FGSC A1156).